Consider the following 502-residue polypeptide: L-arabinose isomerase (502 aa).

Mn(2+) contacts are provided by glutamate 307, glutamate 334, histidine 351, and histidine 450.

The protein belongs to the arabinose isomerase family. Mn(2+) serves as cofactor.

It carries out the reaction beta-L-arabinopyranose = L-ribulose. It participates in carbohydrate degradation; L-arabinose degradation via L-ribulose; D-xylulose 5-phosphate from L-arabinose (bacterial route): step 1/3. Its function is as follows. Catalyzes the conversion of L-arabinose to L-ribulose. In Nocardioides sp. (strain ATCC BAA-499 / JS614), this protein is L-arabinose isomerase.